A 351-amino-acid chain; its full sequence is Modulator of apoptosis 1 (351 aa).

The LIR signature appears at 49–52 (YRLL). The BH3-like stretch occupies residues 120–127 (LSRALGHE). Positions 202–205 (KRRR) are RASSF1-binding.

The protein belongs to the PNMA family. Homodimer. Under normal circumstances, held in an inactive conformation by an intramolecular interaction. Interacts with BAX. Binding to RASSF1 isoform A (RASSF1A) relieves this inhibitory interaction and allows further binding to BAX. Also binds to BCL2 and BCLX. Recruited to the TNFRSF1A and TNFRSF10A complexes in response to their respective cognate ligand, after internalization. Interacts with TRIM39. Interacts with RASSF6. Interacts with ATG8 proteins MAP1LC3A, MAP1LC3B and MAP1LC3C. Does not interact with ATG8 proteins GABARAPL1, GABARAPL2 and GABARAP. Interacts with SQSTM1; promoting dissociation of SQSTM1 inclusion bodies that sequester KEAP1. In terms of processing, ubiquitinated and degraded during mitotic exit by APC/C-Cdh1, this modification is inhibited by TRIM39. As to expression, widely expressed, with high levels in heart and brain.

The protein localises to the cytoplasm. It is found in the cytosol. It localises to the mitochondrion outer membrane. Its subcellular location is the extracellular vesicle membrane. Retrotransposon-derived protein that forms virion-like capsids. Acts as an effector of BAX during apoptosis: enriched at outer mitochondria membrane and associates with BAX upon induction of apoptosis, facilitating BAX-dependent mitochondrial outer membrane permeabilization and apoptosis. Required for death receptor-dependent apoptosis. When associated with RASSF1, promotes BAX conformational change and translocation to mitochondrial membranes in response to TNF and TNFSF10 stimulation. Also promotes autophagy: promotes phagophore closure via association with ATG8 proteins. Acts as an inhibitor of the NFE2L2/NRF2 pathway via interaction with SQSTM1: interaction promotes dissociation of SQSTM1 inclusion bodies that sequester KEAP1, relieving inactivation of the BCR(KEAP1) complex. The polypeptide is Modulator of apoptosis 1 (Homo sapiens (Human)).